A 433-amino-acid chain; its full sequence is Protein arginine N-methyltransferase 2 (433 aa).

The segment at 1–20 is disordered; it reads MATSGDCPRSESQGEEPAEC. 2 interaction with ESR1 regions span residues 1–277 and 133–275; these read MATS…SALK and KESL…NLSA. Residues 30-89 enclose the SH3 domain; it reads VQPEEFVAIADYAATDETQLSFLRGEKILILRQTTADWWWGERAGCCGYIPANHVGKHVD. 2 positions are modified to asymmetric dimethylarginine: Arg-61 and Arg-72. The interval 83–207 is interaction with RB1; sequence HVGKHVDEYD…DVVLPEKVDV (125 aa). The SAM-dependent MTase PRMT-type domain maps to 99–432; the sequence is DEEYFGSYGT…KVGEKVFPIW (334 aa). S-adenosyl-L-methionine is bound by residues His-112, Arg-121, Gly-145, Glu-168, and Glu-197. Active-site residues include Glu-211 and Glu-220.

The protein belongs to the class I-like SAM-binding methyltransferase superfamily. Protein arginine N-methyltransferase family. In terms of assembly, self-associates. Interacts with RB1 and E2F1. Interacts with NCOA6 coactivator. Interacts (via SH3 domain) with PRMT8. Interacts with AR. Interacts with NFKBIA. Interacts with ESR1, ESR2, PGR, PPARG, RARA, RXRA and THRB. Interacts with HNRNPUL1. As to expression, widely expressed. Highly expressed in androgen target organs such as heart, prostate, skeletal muscle, ovary and spinal cord.

Its subcellular location is the cytoplasm. The protein localises to the nucleus. It is found in the nucleolus. The enzyme catalyses L-arginyl-[protein] + 2 S-adenosyl-L-methionine = N(omega),N(omega)-dimethyl-L-arginyl-[protein] + 2 S-adenosyl-L-homocysteine + 2 H(+). In terms of biological role, arginine methyltransferase that methylates the guanidino nitrogens of arginyl residues in proteins such as STAT3, FBL, histone H4. Acts as a coactivator (with NCOA2) of the androgen receptor (AR)-mediated transactivation. Acts as a coactivator (with estrogen) of estrogen receptor (ER)-mediated transactivation. Enhances PGR, PPARG, RARA-mediated transactivation. May inhibit NF-kappa-B transcription and promote apoptosis. Represses E2F1 transcriptional activity (in a RB1-dependent manner). May be involved in growth regulation. This chain is Protein arginine N-methyltransferase 2 (PRMT2), found in Homo sapiens (Human).